Reading from the N-terminus, the 794-residue chain is MPAKDDTSSDKEKSLELFLKIGLDERTAKNTVANNKVTTNLTSVINDAGVTDGCSRTVGNLLYTVATKYPANALPHRPTLLQYIVNSKVKTTAQLDAALSFLSATGSENLDLNKFEEACGVGVEVSTEDIKHAVDEVVEENKATILELRYRVNVGELLGHVRKRLPWADAKVVKQLVDAKLYEILGDRTAADNEKPKKKKEKPAKVEDKAAPVATSEKPLEEDLNPYLIFPNPEDNFKVHTEVPFSDGNILRCCNTKALLEKHLKATGGKVLTRFPPEPNGYLHIGHAKAMFVDFGLAKDRNGGCYLRFDDTNPEAEKKEYIDHIEEIVQWMGWEPFKITYTSNYFQELYEFAVELIRRGHAYVDHQTADEIKEYREKKLNSPWRDRPISESLKLFEDMRRGFIEEGKATLRMKQDMQSDNYNMYDLIAYRIKFTPHPHAGDKWCIYPSYDYAHCIVDSIENVTHSLCTLEFETRRASYYWLLHALGIYQPYVWEYSRLNVSNTVMSKRKLNRLVTEKWVDGWDDPRLMTLAGLRRRGMTPTAINAFVRGMGITRSDGTLISVERLEYHVREELNKTAPRAMVVLHPLKVVITNLEAKSAIEVDAKKWPDAQADDASAFYKIPFSNVVYIERSDFRMQDSKDYYGLAPGKSVILRYAFPIKCTEVILADDNETILEIRAEYDPSKKTKPKGVLHWVSQPSPGVDPLKVEVRLFERLFLSENPAELDNWLGDLNPHSKVEISNAYGVSLLKDAKLGDRFQFERLGYFAVDQDSTPEKLVFNRTVTLKDSYGKGGK.

A disordered region spans residues 192–217; the sequence is DNEKPKKKKEKPAKVEDKAAPVATSE. A 'HIGH' region motif is present at residues 277–287; that stretch reads PEPNGYLHIGH. ATP contacts are provided by residues 278-280 and 284-290; these read EPN and HIGHAKA. 2 residues coordinate L-glutamine: Asp310 and Tyr450. Residues Thr469, 498–499, and 506–508 each bind ATP; these read RL and MSK. The 'KMSKS' region signature appears at 505-509; sequence VMSKR.

The protein belongs to the class-I aminoacyl-tRNA synthetase family.

It carries out the reaction tRNA(Gln) + L-glutamine + ATP = L-glutaminyl-tRNA(Gln) + AMP + diphosphate. The chain is Glutamine--tRNA ligase from Lupinus luteus (European yellow lupine).